The primary structure comprises 93 residues: NADH-dependent phenylglyoxylate dehydrogenase subunit delta (93 aa).

2 4Fe-4S ferredoxin-type domains span residues methionine 39–alanine 68 and histidine 66–arginine 93.

Dimer of heteropentamers composed of an alpha (PadG), a beta (PadI), a gamma (PadE), a delta (PadF) and an epsilon (PadH) subunit. Requires [4Fe-4S] cluster as cofactor.

It carries out the reaction phenylglyoxylate + NAD(+) + CoA = benzoyl-CoA + CO2 + NADH. Its activity is regulated as follows. Activated by magnesium ions and thiamine diphosphate. Functionally, involved in the anaerobic metabolism of phenylalanine and phenylacetate. Catalyzes the oxidative decarboxylation of phenylglyoxylate to benzoyl-CoA and CO(2). It can also react slowly with 2-oxo-3-methylbutanoate and use different electron acceptors such as benzyl viologen, methyl viologen, FAD or FMN, but NAD seems to be the physiological electron acceptor. Also catalyzes an isotope exchange between CO(2) and the carboxyl group which proves partial or complete reversibility of the oxidative decarboxylation reaction. This Aromatoleum evansii (Azoarcus evansii) protein is NADH-dependent phenylglyoxylate dehydrogenase subunit delta (padF).